The sequence spans 319 residues: Proline hydroxylase buaE (319 aa).

In terms of domain architecture, Fe2OG dioxygenase spans 168–280 (NSSELRLNHY…RYSIAYFGKP (113 aa)). Histidine 195, aspartate 197, and histidine 255 together coordinate Fe cation. Arginine 271 lines the 2-oxoglutarate pocket.

The protein belongs to the iron/ascorbate-dependent oxidoreductase family. Requires Fe(2+) as cofactor.

It participates in mycotoxin biosynthesis. Proline hydroxylase; part of the gene cluster that mediates the biosynthesis of burnettramic acids, an unusual class of bolaamphiphilic pyrrolizidinediones that display potent antibacterial, antifungal, and cytotoxic activities. The first step of the biosynthesis of burnettramic acids is the hydroxylation of proline by the proline hydroxylase buaE to generate 4-hydroxyproline. The PKS-NRPS buaA and trans-enoyl reductase buaC construct the highly reduced polyketide chain, and the condensation (C) domain of buaA then catalyzes the amide bond formation with the activated 4-hydroxyproline. This is followed by the R domain releasing the nascent polyketide-peptide directly via a Dieckmann condensation to afford a tetramic acid fused to the hydroxyproline, generating the bicyclic pyrrolidinedione moiety. The cytochrome P450 monooxygenases buaD and buaG are likely responsible for the multiple hydroxylations on the polyketide chain and its terminus, although in the heterologous context, buaD does not appear to be required. Therefore, while buaG may be a multifunctional cytochrome P450 monooxygenase, it cannot be ruled out that the two secondary alcohols on the polyketide chain could have an acetate origin. Finally, the glycosyltransferase buaB transfers beta-D-mannose to the aglycone burnettramic acid A to form burnettramic acid A. Burnettramic acid B is a minor cis-pyrrolizidine epimer of burnettramic acid A and it is likely that small amounts of it form naturally in acidic environments. The chain is Proline hydroxylase buaE from Petromyces alliaceus (Aspergillus alliaceus).